The following is a 414-amino-acid chain: Argininosuccinate synthase (414 aa).

ATP contacts are provided by residues 15 to 23 and A42; that span reads AYSGGLDTS. Residues Y93 and S98 each contribute to the L-citrulline site. Residue G123 coordinates ATP. The L-aspartate site is built by T125, N129, and D130. L-citrulline is bound at residue N129. L-citrulline contacts are provided by R133, S182, S191, E267, and Y279.

This sequence belongs to the argininosuccinate synthase family. Type 1 subfamily. In terms of assembly, homotetramer.

It is found in the cytoplasm. The catalysed reaction is L-citrulline + L-aspartate + ATP = 2-(N(omega)-L-arginino)succinate + AMP + diphosphate + H(+). It functions in the pathway amino-acid biosynthesis; L-arginine biosynthesis; L-arginine from L-ornithine and carbamoyl phosphate: step 2/3. The polypeptide is Argininosuccinate synthase (Deinococcus geothermalis (strain DSM 11300 / CIP 105573 / AG-3a)).